A 258-amino-acid polypeptide reads, in one-letter code: Probable S-methyl-5'-thioinosine phosphorylase (258 aa).

Residue 53–54 (RH) coordinates phosphate. Residue Met180 participates in substrate binding. A phosphate-binding site is contributed by Thr181. Position 204 to 206 (204 to 206 (NQA)) interacts with substrate.

The protein belongs to the PNP/MTAP phosphorylase family. MTAP subfamily. In terms of assembly, homotrimer.

It catalyses the reaction S-methyl-5'-thioinosine + phosphate = 5-(methylsulfanyl)-alpha-D-ribose 1-phosphate + hypoxanthine. It functions in the pathway purine metabolism; purine nucleoside salvage. Functionally, catalyzes the reversible phosphorylation of S-methyl-5'-thioinosine (MTI) to hypoxanthine and 5-methylthioribose-1-phosphate. Involved in the breakdown of S-methyl-5'-thioadenosine (MTA), a major by-product of polyamine biosynthesis. Catabolism of (MTA) occurs via deamination to MTI and phosphorolysis to hypoxanthine. This is Probable S-methyl-5'-thioinosine phosphorylase from Methanosarcina acetivorans (strain ATCC 35395 / DSM 2834 / JCM 12185 / C2A).